The primary structure comprises 554 residues: Formate--tetrahydrofolate ligase (554 aa).

65–72 (TPLGEGKT) is a binding site for ATP.

This sequence belongs to the formate--tetrahydrofolate ligase family.

It carries out the reaction (6S)-5,6,7,8-tetrahydrofolate + formate + ATP = (6R)-10-formyltetrahydrofolate + ADP + phosphate. Its pathway is one-carbon metabolism; tetrahydrofolate interconversion. This chain is Formate--tetrahydrofolate ligase, found in Aliivibrio salmonicida (strain LFI1238) (Vibrio salmonicida (strain LFI1238)).